The sequence spans 355 residues: MPTAIELAEQFQASLVGEAPHGFTGLAPLERAQSNQISFLSNLLYRQQASESAAGALIVSQSDLDFLQANPGANSVKRVYFVAKNPYTTFARMAQYFAKANDPIYASGIHPSAVIDSTAIVPPSCHIGPFVQIGAGVKLGERVSILGNSSIAKDSVIASDTLIYPSVSIYHNTQIGERCIIHSGAVIGADGFGFAPDFSATGGEWVKIPQTGRVVISNDVEIGASTTIDRGAMSDTVIGAGTKIDNQVQIAHNVIVGSCCVIAGCAAISGSTKIGNFCIIGGAANFAGHLTIADRTTVSGNTSIIRSITEPGQHFTGVYPSMLHGAWEKNAAILRGLDKIRQRLRLLDKNKNSGS.

H252 acts as the Proton acceptor in catalysis.

It belongs to the transferase hexapeptide repeat family. LpxD subfamily. As to quaternary structure, homotrimer.

The enzyme catalyses a UDP-3-O-[(3R)-3-hydroxyacyl]-alpha-D-glucosamine + a (3R)-hydroxyacyl-[ACP] = a UDP-2-N,3-O-bis[(3R)-3-hydroxyacyl]-alpha-D-glucosamine + holo-[ACP] + H(+). Its pathway is bacterial outer membrane biogenesis; LPS lipid A biosynthesis. Its function is as follows. Catalyzes the N-acylation of UDP-3-O-acylglucosamine using 3-hydroxyacyl-ACP as the acyl donor. Is involved in the biosynthesis of lipid A, a phosphorylated glycolipid that anchors the lipopolysaccharide to the outer membrane of the cell. The polypeptide is UDP-3-O-acylglucosamine N-acyltransferase (Polynucleobacter necessarius subsp. necessarius (strain STIR1)).